The following is a 411-amino-acid chain: Tyrosine--tRNA ligase (411 aa).

L-tyrosine is bound at residue Tyr34. The short motif at 39 to 48 is the 'HIGH' region element; that stretch reads CTATSLHIGS. Tyr171 and Gln175 together coordinate L-tyrosine. Residues 231 to 235 carry the 'KMSKS' region motif; that stretch reads KMGKT. Lys234 provides a ligand contact to ATP. The S4 RNA-binding domain occupies 345 to 411; sequence ISAYELFHEA…GKKRHILVRV (67 aa).

Belongs to the class-I aminoacyl-tRNA synthetase family. TyrS type 1 subfamily. In terms of assembly, homodimer.

Its subcellular location is the cytoplasm. It carries out the reaction tRNA(Tyr) + L-tyrosine + ATP = L-tyrosyl-tRNA(Tyr) + AMP + diphosphate + H(+). In terms of biological role, catalyzes the attachment of tyrosine to tRNA(Tyr) in a two-step reaction: tyrosine is first activated by ATP to form Tyr-AMP and then transferred to the acceptor end of tRNA(Tyr). The polypeptide is Tyrosine--tRNA ligase (Rickettsia felis (strain ATCC VR-1525 / URRWXCal2) (Rickettsia azadi)).